A 724-amino-acid polypeptide reads, in one-letter code: NAD(+) hydrolase SARM1 (724 aa).

The N-terminal 27 residues, M1 to R27, are a transit peptide targeting the mitochondrion. An ARM 1 repeat occupies E60 to E100. Residues W103, R110, E149–R157, and H190–K193 contribute to the NAD(+) site. 7 ARM repeats span residues Q114–V153, E155–K193, E196–L235, G237–N280, K281–D314, A315–A354, and Q359–P402. 2 SAM domains span residues W412–F476 and N486–S548. Phosphoserine occurs at positions 548 and 558. In terms of domain architecture, TIR spans D560–P703. Residues R569–R570 and E599 each bind NAD(+). Residue E642 is part of the active site. The segment covering P703–G717 has biased composition (polar residues). Positions P703–P724 are disordered.

The protein belongs to the SARM1 family. As to quaternary structure, homooctamer; forms an octameric ring via SAM domains. Interacts with TICAM1/TRIF and thereby interferes with TICAM1/TRIF function. Interacts with MAPK10/JNK3 and SDC2 (via cytoplasmic domain). Phosphorylation at Ser-548 by JNK kinases (MAPK8, MAPK9 and /or MAPK10) enhance the NAD(+) hydrolase (NADase) activity. Phosphorylation at Ser-548 and subsequent activation takes place in response to oxidative stress conditions and inhibits mitochondrial respiration. Phosphorylation at Ser-548 increases in response to cerebral ischemia/reperfusion (I/R) injury.

The protein resides in the cytoplasm. The protein localises to the cell projection. Its subcellular location is the axon. It is found in the dendrite. It localises to the synapse. The protein resides in the mitochondrion. It catalyses the reaction NAD(+) + H2O = ADP-D-ribose + nicotinamide + H(+). The catalysed reaction is NAD(+) = cyclic ADP-beta-D-ribose + nicotinamide + H(+). The enzyme catalyses NADP(+) + H2O = ADP-D-ribose 2'-phosphate + nicotinamide + H(+). Autoinhibited: in the inactive state, the enzymatic TIR domain is held apart by the autoinhibiting ARM repeats. NAD(+)-binding to ARM repeats maintains an inactive state by promoting interaction between ARM repeats and the TIR domain, thereby facilitating inhibition of the enzymatic TIR domain. Following activation, possibly by nicotinamide mononucleotide (NMN), auto-inhibitory interactions are released, allowing self-association of the TIR domains and subsequent activation of the NAD(+) hydrolase (NADase) activity. Self-association of TIR domains is facilitated by the octamer of SAM domains. NAD(+) hydrolase, which plays a key role in axonal degeneration following injury by regulating NAD(+) metabolism. Acts as a negative regulator of MYD88- and TRIF-dependent toll-like receptor signaling pathway by promoting Wallerian degeneration, an injury-induced form of programmed subcellular death which involves degeneration of an axon distal to the injury site. Wallerian degeneration is triggered by NAD(+) depletion: in response to injury, SARM1 is activated and catalyzes cleavage of NAD(+) into ADP-D-ribose (ADPR), cyclic ADPR (cADPR) and nicotinamide; NAD(+) cleavage promoting cytoskeletal degradation and axon destruction. Also able to hydrolyze NADP(+), but not other NAD(+)-related molecules. Can activate neuronal cell death in response to stress. Regulates dendritic arborization through the MAPK4-JNK pathway. Involved in innate immune response: inhibits both TICAM1/TRIF- and MYD88-dependent activation of JUN/AP-1, TRIF-dependent activation of NF-kappa-B and IRF3, and the phosphorylation of MAPK14/p38. In Rattus norvegicus (Rat), this protein is NAD(+) hydrolase SARM1.